The sequence spans 202 residues: Protein EMBRYO DEFECTIVE 514 (202 aa).

2 disordered regions span residues 1–69 and 168–202; these read MAEE…PVKL and MKTPGANGNGHGGGRGGGGGRRGGRGGGRGGRFRR. Alanine 2 bears the N-acetylalanine mark. Composition is skewed to basic and acidic residues over residues 33–42 and 51–65; these read ETGDEKRERE and GESKKQKVGEEEKSG. Residues 174 to 202 show a composition bias toward gly residues; sequence NGNGHGGGRGGGGGRRGGRGGGRGGRFRR.

In terms of tissue distribution, expressed in leaves, flowers and embryos at globular stage.

It localises to the nucleus. Its function is as follows. May play a role in ribosome biogenesis and in determining the rate of cell division. Involved in a process essential for nuclear and nucleolar functions. The chain is Protein EMBRYO DEFECTIVE 514 from Arabidopsis thaliana (Mouse-ear cress).